The sequence spans 74 residues: Exodeoxyribonuclease 7 small subunit (74 aa).

Belongs to the XseB family. Heterooligomer composed of large and small subunits.

The protein resides in the cytoplasm. It carries out the reaction Exonucleolytic cleavage in either 5'- to 3'- or 3'- to 5'-direction to yield nucleoside 5'-phosphates.. In terms of biological role, bidirectionally degrades single-stranded DNA into large acid-insoluble oligonucleotides, which are then degraded further into small acid-soluble oligonucleotides. The chain is Exodeoxyribonuclease 7 small subunit from Clostridium beijerinckii (strain ATCC 51743 / NCIMB 8052) (Clostridium acetobutylicum).